Consider the following 335-residue polypeptide: Vitamin B12 import system permease protein BtuC (335 aa).

9 helical membrane-spanning segments follow: residues 25–45 (LVVI…IWLW), 67–87 (LAVL…QALF), 95–114 (GLLG…VLLG), 118–140 (LPIW…LLLG), 153–173 (LLVG…AVYF), 200–220 (LVLA…VLNF), 243–263 (VLAI…ISFI), 286–306 (CALA…IALF), and 308–328 (AELP…IWLL).

It belongs to the binding-protein-dependent transport system permease family. FecCD subfamily. In terms of assembly, the complex is composed of two ATP-binding proteins (BtuD), two transmembrane proteins (BtuC) and a solute-binding protein (BtuF).

The protein localises to the cell inner membrane. Part of the ABC transporter complex BtuCDF involved in vitamin B12 import. Involved in the translocation of the substrate across the membrane. The chain is Vitamin B12 import system permease protein BtuC from Yersinia enterocolitica serotype O:8 / biotype 1B (strain NCTC 13174 / 8081).